The sequence spans 157 residues: XylDLEGF operon transcriptional activator 2 (157 aa).

One can recognise an HTH araC/xylS-type domain in the interval 39–140; the sequence is ERVVQFIEEN…GELPSDTLSL (102 aa). 2 DNA-binding regions (H-T-H motif) span residues 56-77 and 107-130; these read EQLA…EKHT and ITEV…RSTF.

It localises to the cytoplasm. In terms of biological role, regulatory protein of the TOL plasmid xyl operons. XylS activates the xylXYZLTEGFJQKIH operon required for the degradation of toluene, m-xylene and p-xylene. In Pseudomonas putida (Arthrobacter siderocapsulatus), this protein is XylDLEGF operon transcriptional activator 2 (xylS2).